The sequence spans 352 residues: MKKIVFTGGGTVGHVTLNLLLMPKFIEDGWEVHYIGDKRGIEHQEILKSGLDVTFHSIATGKLRRYFSWQNMLDVFKVGWGIVQSLFIMLRLRPQTLFSKGGFVSVPPVIAARVSGVPVFIHESDLSMGLANKIAYKFATKMYSTFEQASSLSKVEHVGAVTKVSDQKNPEPDELVDIQSHFNHKLPTVLFVGGSAGARVFNQLVTDHKKELTERYNIINLTGDSSLNELSQNLFRVDYVTDLYQPLMELADIVVTRGGANTIFELLAIAKLHVIVPLGREASRGDQIENAAYFVKKGYAEDLQESDLTLDSLEEKLSHLLSHKEDYQAKMKASTELKSLADFYQLLKKDLS.

Serine 195 and glutamine 287 together coordinate UDP-N-acetyl-alpha-D-glucosamine.

This sequence belongs to the glycosyltransferase 28 family. MurG subfamily.

Its subcellular location is the cell membrane. It carries out the reaction Mur2Ac(oyl-L-Ala-gamma-D-Glu-L-Lys-D-Ala-D-Ala)-di-trans,octa-cis-undecaprenyl diphosphate + UDP-N-acetyl-alpha-D-glucosamine = beta-D-GlcNAc-(1-&gt;4)-Mur2Ac(oyl-L-Ala-gamma-D-Glu-L-Lys-D-Ala-D-Ala)-di-trans,octa-cis-undecaprenyl diphosphate + UDP + H(+). It functions in the pathway cell wall biogenesis; peptidoglycan biosynthesis. Functionally, cell wall formation. Catalyzes the transfer of a GlcNAc subunit on undecaprenyl-pyrophosphoryl-MurNAc-pentapeptide (lipid intermediate I) to form undecaprenyl-pyrophosphoryl-MurNAc-(pentapeptide)GlcNAc (lipid intermediate II). This Streptococcus pneumoniae (strain 70585) protein is UDP-N-acetylglucosamine--N-acetylmuramyl-(pentapeptide) pyrophosphoryl-undecaprenol N-acetylglucosamine transferase.